The primary structure comprises 120 residues: Large ribosomal subunit protein uL18 (120 aa).

The protein belongs to the universal ribosomal protein uL18 family. As to quaternary structure, part of the 50S ribosomal subunit; part of the 5S rRNA/L5/L18/L25 subcomplex. Contacts the 5S and 23S rRNAs.

In terms of biological role, this is one of the proteins that bind and probably mediate the attachment of the 5S RNA into the large ribosomal subunit, where it forms part of the central protuberance. The polypeptide is Large ribosomal subunit protein uL18 (Exiguobacterium sp. (strain ATCC BAA-1283 / AT1b)).